Reading from the N-terminus, the 552-residue chain is Protein FAM234A (552 aa).

The segment at 1 to 40 (MMDDKDLEAEIHPLKNEDKKSQENLGNLPKTEDNLKNKPV) is disordered. Topologically, residues 1 to 49 (MMDDKDLEAEIHPLKNEDKKSQENLGNLPKTEDNLKNKPVPSRLSRCRT) are cytoplasmic. The segment covering 8 to 22 (EAEIHPLKNEDKKSQ) has biased composition (basic and acidic residues). At S21 the chain carries Phosphoserine. A helical; Signal-anchor for type II membrane protein membrane pass occupies residues 50–70 (VAFFLSLFICLFVVFVLSFII). Topologically, residues 71-552 (PCPDRPSSED…FSRLRYRSEV (482 aa)) are extracellular. N116, N119, N314, and N473 each carry an N-linked (GlcNAc...) asparagine glycan.

It belongs to the FAM234 family.

Its subcellular location is the membrane. In Rattus norvegicus (Rat), this protein is Protein FAM234A (Fam234a).